Reading from the N-terminus, the 455-residue chain is Kynurenine--oxoglutarate transaminase 3 (455 aa).

Substrate is bound at residue Gly71. Lys116 carries the post-translational modification N6-acetyllysine; alternate. An N6-succinyllysine; alternate modification is found at Lys116. Asn218 lines the substrate pocket. An N6-(pyridoxal phosphate)lysine modification is found at Lys280. Position 430 (Arg430) interacts with substrate.

The protein belongs to the class-I pyridoxal-phosphate-dependent aminotransferase family. In terms of assembly, homodimer. Pyridoxal 5'-phosphate serves as cofactor.

It carries out the reaction L-kynurenine + 2-oxoglutarate = kynurenate + L-glutamate + H2O. The enzyme catalyses L-kynurenine + glyoxylate = kynurenate + glycine + H2O. It catalyses the reaction 3-hydroxy-L-kynurenine + glyoxylate = xanthurenate + glycine + H2O. The catalysed reaction is an S-substituted L-cysteine + H2O = a thiol + pyruvate + NH4(+). Its pathway is amino-acid degradation; L-kynurenine degradation; kynurenate from L-kynurenine: step 1/2. In terms of biological role, catalyzes the irreversible transamination of the L-tryptophan metabolite L-kynurenine to form kynurenic acid (KA), an intermediate in the tryptophan catabolic pathway which is also a broad spectrum antagonist of the three ionotropic excitatory amino acid receptors among others. May catalyze the beta-elimination of S-conjugates and Se-conjugates of L-(seleno)cysteine, resulting in the cleavage of the C-S or C-Se bond. Has transaminase activity towards L-kynurenine, tryptophan, phenylalanine, serine, cysteine, methionine, histidine, glutamine and asparagine with glyoxylate as an amino group acceptor (in vitro). Has lower activity with 2-oxoglutarate as amino group acceptor (in vitro). This Bos taurus (Bovine) protein is Kynurenine--oxoglutarate transaminase 3.